Here is a 373-residue protein sequence, read N- to C-terminus: Queuine tRNA-ribosyltransferase (373 aa).

The Proton acceptor role is filled by D93. Substrate contacts are provided by residues 93–97 (DSGGF), D147, Q189, and G216. Positions 247-253 (GVGAPED) are RNA binding. D266 serves as the catalytic Nucleophile. Positions 271–275 (TRIAR) are RNA binding; important for wobble base 34 recognition. Residues C304, C306, C309, and H335 each contribute to the Zn(2+) site.

Belongs to the queuine tRNA-ribosyltransferase family. Homodimer. Within each dimer, one monomer is responsible for RNA recognition and catalysis, while the other monomer binds to the replacement base PreQ1. Zn(2+) is required as a cofactor.

It carries out the reaction 7-aminomethyl-7-carbaguanine + guanosine(34) in tRNA = 7-aminomethyl-7-carbaguanosine(34) in tRNA + guanine. It functions in the pathway tRNA modification; tRNA-queuosine biosynthesis. Catalyzes the base-exchange of a guanine (G) residue with the queuine precursor 7-aminomethyl-7-deazaguanine (PreQ1) at position 34 (anticodon wobble position) in tRNAs with GU(N) anticodons (tRNA-Asp, -Asn, -His and -Tyr). Catalysis occurs through a double-displacement mechanism. The nucleophile active site attacks the C1' of nucleotide 34 to detach the guanine base from the RNA, forming a covalent enzyme-RNA intermediate. The proton acceptor active site deprotonates the incoming PreQ1, allowing a nucleophilic attack on the C1' of the ribose to form the product. After dissociation, two additional enzymatic reactions on the tRNA convert PreQ1 to queuine (Q), resulting in the hypermodified nucleoside queuosine (7-(((4,5-cis-dihydroxy-2-cyclopenten-1-yl)amino)methyl)-7-deazaguanosine). This is Queuine tRNA-ribosyltransferase from Halothermothrix orenii (strain H 168 / OCM 544 / DSM 9562).